Reading from the N-terminus, the 473-residue chain is Photosystem II CP43 reaction center protein (473 aa).

Residues 1-14 (MKTLYSLRRFYPVE) constitute a propeptide that is removed on maturation. Thr-15 is subject to N-acetylthreonine. Thr-15 carries the phosphothreonine modification. 5 helical membrane-spanning segments follow: residues 69 to 93 (LFEV…PHLA), 134 to 155 (LLGP…KDRN), 178 to 200 (KALY…RKIT), 255 to 275 (KPFA…LSYS), and 291 to 312 (WFNN…ASQA). Glu-367 contacts [CaMn4O5] cluster. The chain crosses the membrane as a helical span at residues 447 to 471 (RARAAAAGFEKGIDRDFEPVLFMTP).

This sequence belongs to the PsbB/PsbC family. PsbC subfamily. In terms of assembly, PSII is composed of 1 copy each of membrane proteins PsbA, PsbB, PsbC, PsbD, PsbE, PsbF, PsbH, PsbI, PsbJ, PsbK, PsbL, PsbM, PsbT, PsbX, PsbY, PsbZ, Psb30/Ycf12, at least 3 peripheral proteins of the oxygen-evolving complex and a large number of cofactors. It forms dimeric complexes. Binds multiple chlorophylls and provides some of the ligands for the Ca-4Mn-5O cluster of the oxygen-evolving complex. It may also provide a ligand for a Cl- that is required for oxygen evolution. PSII binds additional chlorophylls, carotenoids and specific lipids. serves as cofactor.

It localises to the plastid. It is found in the chloroplast thylakoid membrane. One of the components of the core complex of photosystem II (PSII). It binds chlorophyll and helps catalyze the primary light-induced photochemical processes of PSII. PSII is a light-driven water:plastoquinone oxidoreductase, using light energy to abstract electrons from H(2)O, generating O(2) and a proton gradient subsequently used for ATP formation. This chain is Photosystem II CP43 reaction center protein, found in Cucumis sativus (Cucumber).